Consider the following 366-residue polypeptide: Cyclic amide hydrolase (366 aa).

The segment at 1-103 (MKVGVHKLAM…TLFTRAPDDG (103 aa)) is RU A. Substrate contacts are provided by residues arginine 51 and 82-83 (SG). The RU B stretch occupies residues 110-247 (RLALGIGITR…CEVLLFGNAP (138 aa)). Residue lysine 160 is part of the active site. Substrate is bound by residues arginine 192, 230-231 (SA), arginine 327, and 346-347 (SG). Serine 230 acts as the Nucleophile in catalysis. An RU C region spans residues 253–366 (FRIGHGVLKD…AAPIAAIVRA (114 aa)).

It belongs to the cyclic amide hydrolase (CyAH) family. In terms of assembly, homotetramer.

Its function is as follows. Cyclic amide hydrolase of unknown substrate specificity. Catalyzes the hydrolytic ring-opening of a cyclic amide. Does not act on cyanuric acid nor barbituric acid. The polypeptide is Cyclic amide hydrolase (Azorhizobium caulinodans (strain ATCC 43989 / DSM 5975 / JCM 20966 / LMG 6465 / NBRC 14845 / NCIMB 13405 / ORS 571)).